Here is a 441-residue protein sequence, read N- to C-terminus: ATP-dependent protease ATPase subunit HslU (441 aa).

ATP contacts are provided by residues Ile18, 60–65, Asp254, Glu319, and Arg391; that span reads GVGKTE.

It belongs to the ClpX chaperone family. HslU subfamily. In terms of assembly, a double ring-shaped homohexamer of HslV is capped on each side by a ring-shaped HslU homohexamer. The assembly of the HslU/HslV complex is dependent on binding of ATP.

It localises to the cytoplasm. ATPase subunit of a proteasome-like degradation complex; this subunit has chaperone activity. The binding of ATP and its subsequent hydrolysis by HslU are essential for unfolding of protein substrates subsequently hydrolyzed by HslV. HslU recognizes the N-terminal part of its protein substrates and unfolds these before they are guided to HslV for hydrolysis. The chain is ATP-dependent protease ATPase subunit HslU from Shewanella woodyi (strain ATCC 51908 / MS32).